We begin with the raw amino-acid sequence, 151 residues long: Large ribosomal subunit protein bL9 (151 aa).

It belongs to the bacterial ribosomal protein bL9 family.

Its function is as follows. Binds to the 23S rRNA. The protein is Large ribosomal subunit protein bL9 of Pelobacter propionicus (strain DSM 2379 / NBRC 103807 / OttBd1).